The following is a 622-amino-acid chain: Probable potassium transport system protein Kup 2 (622 aa).

The next 12 helical transmembrane spans lie at 9 to 29 (LSGV…TSPL), 46 to 66 (PASI…VVSV), 99 to 119 (TPLL…EVVI), 137 to 157 (PSLD…LFAI), 169 to 189 (FAPI…NSIF), 213 to 233 (ASFF…ALYA), 247 to 267 (WFMV…ALLL), 285 to 305 (ALLP…QAVI), 337 to 357 (IYIP…IMSF), 363 to 383 (LAAA…ILSC), 396 to 416 (LVAA…AANL), and 419 to 439 (IFSG…VMTS).

The protein belongs to the HAK/KUP transporter (TC 2.A.72) family.

It is found in the cell inner membrane. The enzyme catalyses K(+)(in) + H(+)(in) = K(+)(out) + H(+)(out). Its function is as follows. Transport of potassium into the cell. Likely operates as a K(+):H(+) symporter. The chain is Probable potassium transport system protein Kup 2 from Aeromonas hydrophila subsp. hydrophila (strain ATCC 7966 / DSM 30187 / BCRC 13018 / CCUG 14551 / JCM 1027 / KCTC 2358 / NCIMB 9240 / NCTC 8049).